We begin with the raw amino-acid sequence, 287 residues long: MKICRFNENRLGVVDGDEVLDVTEALSVLPSYEYPLPGYDPLIKHLDALLARIETLIKDAPRILLADVRLLSPVANPGKIIAAPINYTRHLQEVLADSAINNGVASFTQHIKKSGLFLKANSSLAGAGEGVALSHQDRRNDHEVELAIVIGKTARNVPREKSLEYVAGYCIGIDMTVRGPEERSFRKSPDSYTILGPWLVTRDEIDSPGELQMSLKVNGEVRQNANTSDLILGVEELVEFASSFYTLHPGDVIISGTPEGVGPVNPGDAMLAEIERIGTMTIAIRSV.

A divalent metal cation is bound by residues glutamate 143, glutamate 145, and aspartate 174.

This sequence belongs to the FAH family. Homodimer.

The enzyme catalyses 3-maleylpyruvate + H2O = maleate + pyruvate + H(+). Its activity is regulated as follows. Activated by Mn(2+). Inhibited by Ni(2+), Cd(2+), Co(2+) or Cu(2+). Functionally, involved in the degradation of gentisate. Catalyzes the hydrolysis of 3-maleylpyruvate, the ring-cleavage product of gentisate. The protein is Maleylpyruvate hydrolase of Aquipseudomonas alcaligenes (Pseudomonas alcaligenes).